The following is a 119-amino-acid chain: Ribonuclease P protein component (119 aa).

It belongs to the RnpA family. Consists of a catalytic RNA component (M1 or rnpB) and a protein subunit.

The enzyme catalyses Endonucleolytic cleavage of RNA, removing 5'-extranucleotides from tRNA precursor.. Its function is as follows. RNaseP catalyzes the removal of the 5'-leader sequence from pre-tRNA to produce the mature 5'-terminus. It can also cleave other RNA substrates such as 4.5S RNA. The protein component plays an auxiliary but essential role in vivo by binding to the 5'-leader sequence and broadening the substrate specificity of the ribozyme. In Bacillus cereus (strain ZK / E33L), this protein is Ribonuclease P protein component.